The primary structure comprises 427 residues: Trigger factor (427 aa).

Residues 163 to 248 (GDTVVIDFVG…IHEVKAKEVP (86 aa)) form the PPIase FKBP-type domain.

This sequence belongs to the FKBP-type PPIase family. Tig subfamily.

It is found in the cytoplasm. The catalysed reaction is [protein]-peptidylproline (omega=180) = [protein]-peptidylproline (omega=0). Involved in protein export. Acts as a chaperone by maintaining the newly synthesized protein in an open conformation. Functions as a peptidyl-prolyl cis-trans isomerase. The chain is Trigger factor from Streptococcus pneumoniae (strain JJA).